The following is a 195-amino-acid chain: MRTGAVSRKTKETEIEVAVDLDGRGTAHISTGIGFFDHMLEQLARHSLIDMTIKAKGDLHIDDHHTVEDTGIALGQAVRQALGDRAGITRYADVLLPMDETLTRVAVDVSGRPYLVFRTHFLRDKIGTFDTELVREFFQAFTTHLGANIHVETLYGENAHHISESSFKGLARALRVALTLDPRQLGEIPSTKGVL.

It belongs to the imidazoleglycerol-phosphate dehydratase family.

It is found in the cytoplasm. The enzyme catalyses D-erythro-1-(imidazol-4-yl)glycerol 3-phosphate = 3-(imidazol-4-yl)-2-oxopropyl phosphate + H2O. Its pathway is amino-acid biosynthesis; L-histidine biosynthesis; L-histidine from 5-phospho-alpha-D-ribose 1-diphosphate: step 6/9. In Beijerinckia indica subsp. indica (strain ATCC 9039 / DSM 1715 / NCIMB 8712), this protein is Imidazoleglycerol-phosphate dehydratase.